The sequence spans 325 residues: 33 kDa chaperonin (325 aa).

2 cysteine pairs are disulfide-bonded: C260/C262 and C293/C296.

The protein belongs to the HSP33 family. Under oxidizing conditions two disulfide bonds are formed involving the reactive cysteines. Under reducing conditions zinc is bound to the reactive cysteines and the protein is inactive.

It is found in the cytoplasm. Its function is as follows. Redox regulated molecular chaperone. Protects both thermally unfolding and oxidatively damaged proteins from irreversible aggregation. Plays an important role in the bacterial defense system toward oxidative stress. The protein is 33 kDa chaperonin of Aquifex aeolicus (strain VF5).